The primary structure comprises 1095 residues: Voltage-gated inwardly rectifying potassium channel KCNH3 (1095 aa).

Residues 1–228 (MPAMRGLLAP…HCGALRATWD (228 aa)) are Cytoplasmic-facing. The region spanning 18 to 90 (IATRFDGTHS…QQIRKALDEH (73 aa)) is the PAS domain. Residues 93-145 (FKAELILYRKSGLPFWCLLDVIPIKNEKGEVALFLVSHKDISETKNRGGPDNW) enclose the PAC domain. The segment covering 137–150 (KNRGGPDNWKERGG) has biased composition (basic and acidic residues). The disordered stretch occupies residues 137–161 (KNRGGPDNWKERGGGRRRYGRAGSK). The chain crosses the membrane as a helical span at residues 229 to 249 (GFILLATLYVAVTVPYSVCVS). Over 250–259 (TAREPSAARG) the chain is Extracellular. Residues 260–280 (PPSVCDLAVEVLFILDIVLNF) traverse the membrane as a helical segment. Residues 281-302 (RTTFVSKSGQVVFAPKSICLHY) are Cytoplasmic-facing. A helical transmembrane segment spans residues 303-323 (VTTWFLLDVIAALPFDLLHAF). Residues 324–331 (KVNVYVGA) lie on the Extracellular side of the membrane. Residues 332-352 (HLLKTVRLLRLLRLLPRLDRY) form a helical; Voltage-sensor membrane-spanning segment. Residues 353-361 (SQYSAVVLT) are Cytoplasmic-facing. Residues 362–382 (LLMAVFALLAHWVACVWFYIG) traverse the membrane as a helical segment. Residues 383-464 (QQEIESSESE…GGPSLRSAYI (82 aa)) lie on the Extracellular side of the membrane. The disordered stretch occupies residues 417–447 (PDGGNSSGQSENCSSSSSSSGSGGGRGSEAN). The segment covering 419 to 436 (GGNSSGQSENCSSSSSSS) has biased composition (low complexity). N-linked (GlcNAc...) asparagine glycosylation is found at Asn-421, Asn-428, and Asn-447. The pore-forming intramembrane region spans 465-485 (TSLYFALSSLTSVGFGNVSAN). The Selectivity filter signature appears at 476–481 (SVGFGN). At 486-490 (TDTEK) the chain is on the extracellular side. A helical membrane pass occupies residues 491 to 511 (IFSICTMLIGALMHAVVFGNV). Over 512–1095 (TAIIQRMYAR…QWTQEEGTGV (584 aa)) the chain is Cytoplasmic. 593–708 (LFEAASRGCL…FAPRFSRGLR (116 aa)) is an a nucleoside 3',5'-cyclic phosphate binding site. 3 disordered regions span residues 740 to 823 (EEKE…LPPM), 854 to 883 (VGQS…PSEA), and 965 to 1069 (GSVL…PWDP). The segment covering 784–796 (TAPRPRLGGRGRP) has biased composition (basic residues). Residues 857-872 (SGPECSSSPSPGTESG) are compositionally biased toward low complexity. The span at 974–991 (HPRPGQPPPLMAPWPWGP) shows a compositional bias: pro residues.

It belongs to the potassium channel family. H (Eag) (TC 1.A.1.20) subfamily. Kv12.2/KCNH3 sub-subfamily. As to quaternary structure, the potassium channel is probably composed of a homo- or heterotetrameric complex of pore-forming alpha subunits that can associate with modulating beta subunits. Interacts with KCNE1 and KCNE3; these interactions regulate KCNH3 trafficking to the plasma membrane and its subsequent voltage-gated potassium channel activity. Post-translationally, N-glycosylated. N-glycosylation mediates traffick to the cell membrane but is not necessary for voltage-gated potassium channel activity. In terms of tissue distribution, detected in brain, but not in other tissues.

It is found in the cell membrane. It catalyses the reaction K(+)(in) = K(+)(out). In terms of biological role, pore-forming (alpha) subunit of a voltage-gated inwardly rectifying potassium channel. Charactherized by a fast rate of activation during depolarization followed by a rapid inactivation at much more depolarized value causing inward rectification due to a C-type inactivation mechanism. Exhibits a rapid recovery from inactivation. The sequence is that of Voltage-gated inwardly rectifying potassium channel KCNH3 from Mus musculus (Mouse).